Consider the following 261-residue polypeptide: Neurovirulence factor ICP34.5 (261 aa).

Over residues 1-17 the composition is skewed to basic residues; that stretch reads MSRRRGPRRRGPRRRPR. The segment at 1 to 19 is required for nucleolar localization; sequence MSRRRGPRRRGPRRRPRPG. Disordered stretches follow at residues 1-59, 75-135, and 145-164; these read MSRR…SAPA, DSDD…LALR, and RLSLRRRRPPASPPADAPRG. 4 repeats span residues 3–7, 8–12, 16–23, and 24–31; these read RRRGP and PRPGAPAV. The tract at residues 3-12 is 2 X 5 AA tandem repeats of R-R-R-G-P; the sequence is RRRGPRRRGP. Positions 16 to 31 are 2 X 8 AA tandem repeats of P-R-P-G-A-P-A-V; it reads PRPGAPAVPRPGAPAV. The span at 18 to 32 shows a compositional bias: pro residues; sequence PGAPAVPRPGAPAVP. The segment covering 75-88 has biased composition (acidic residues); the sequence is DSDDADYAGNDDAE. The segment covering 101-111 has biased composition (low complexity); sequence APEAPHAAPAA. The Nuclear export signal signature appears at 128–137; sequence LPPHLALRLR. A binding to PP1CA region spans residues 163-176; it reads RGKVCFSPRVQVRH. Positions 163 to 176 are interaction with host PPP1CA; that stretch reads RGKVCFSPRVQVRH. The important for interferon resistance stretch occupies residues 178–261; the sequence is VAWETAARLA…AAAGPGRRAV (84 aa). Residues 188-206 carry the Bipartite nuclear localization signal motif; the sequence is RRGSWARERADRDRFRRRV. The segment at 206-221 is interaction with host EIF2S1/EIF-2ALPHA; the sequence is VAAAEAVIGPCLEPEA. The interval 223 to 261 is disordered; sequence ARARARARAHEDGGPAEEEEAAAAARGSSAAAGPGRRAV. Residues 244-261 are compositionally biased toward low complexity; that stretch reads AAAARGSSAAAGPGRRAV.

This sequence belongs to the PPP1R15 family. Interacts with host PPP1CA to form a high-molecular-weight complex that dephosphorylates EIF2S1/eIF-2alpha. Interacts with host EIF2S1/eIF-2alpha; this interaction is crucial for the specific dephosphorylation of EIF2S1/eIF-2alpha by PPP1CA.

The protein resides in the host cytoplasm. It is found in the host nucleus. It localises to the host nucleolus. The protein localises to the virion. In terms of biological role, plays essential roles in viral nuclear egress to mediate capsid transit across the nuclear membrane and also in the inhibition of host immune response and integrated stress response (ISR). Facilitates nuclear egress cooperatively with host C1QBP and protein kinase C/PKC to induce lamin A/C phosphorylation and subsequent reorganization. In turn, lamina disassembles and nuclear egress occurs. Recruits the serine/threonine-protein phosphatase PPP1CA/PP1-alpha to dephosphorylate the translation initiation factor EIF2S1/eIF-2alpha, thereby couteracting the host shutoff of protein synthesis involving double-stranded RNA-dependent protein kinase EIF2AK2/PKR. Also down-modulates the host MHC class II proteins cell surface expression. Acts as a neurovirulence factor that has a profound effect on the growth of the virus in central nervous system tissue, probably through its ability to maintain an environment favorable for viral replication. This Human herpesvirus 2 (strain HG52) (HHV-2) protein is Neurovirulence factor ICP34.5 (RL1).